We begin with the raw amino-acid sequence, 504 residues long: UNC93-like protein C922.05c (504 aa).

A run of 11 helical transmembrane segments spans residues 64 to 84 (IIVS…SGLG), 97 to 116 (ANVA…GSIC), 123 to 145 (LTLA…YKHV), 149 to 169 (GFVI…WAAQ), 186 to 206 (IAIF…VPLA), 219 to 239 (GTYA…LFMV), 275 to 293 (YWVL…FTTY), 310 to 330 (LNNL…ALFL), 343 to 363 (VGWG…LAFQ), 391 to 411 (FLYI…YWII), and 452 to 472 (YFAS…PVIW).

Belongs to the unc-93 family.

It localises to the cytoplasm. Its subcellular location is the membrane. The sequence is that of UNC93-like protein C922.05c from Schizosaccharomyces pombe (strain 972 / ATCC 24843) (Fission yeast).